A 296-amino-acid polypeptide reads, in one-letter code: MVNLLFLFFIMSFFPNNIFDYDQQAITDLLITASLKILFALAILLIGFWLSKRLQKLIIRALRKSNLEPTFISFAGNISYYLLLVVFFVLCLAQLGIQTSSLVALLGASTLAIGLALQGSLANVAGGILLVLFNYFRVGERIEVAGIEGIVESIEILSTTICTYDNRLVTIPNKQIIENNIINHVGKPERRIDLVIGVGYEEDIDHVRSSLQWVIDQNSEVCTEPAPTIALGELGDSSVNFYVRPWVKSEDYFRLKLQLTEAIKRKLDEENISIPFPQRDVHLIQPETKELDIKAA.

6 helical membrane-spanning segments follow: residues 1–21, 30–50, 71–91, 92–112, 113–133, and 142–162; these read MVNLLFLFFIMSFFPNNIFDY, LITASLKILFALAILLIGFWL, FISFAGNISYYLLLVVFFVLC, LAQLGIQTSSLVALLGASTLA, IGLALQGSLANVAGGILLVLF, and IEVAGIEGIVESIEILSTTIC.

Belongs to the MscS (TC 1.A.23) family.

It localises to the cell membrane. This is an uncharacterized protein from Synechocystis sp. (strain ATCC 27184 / PCC 6803 / Kazusa).